A 97-amino-acid chain; its full sequence is Homeobox protein HD-9 (97 aa).

Positions 6–65 form a DNA-binding region, homeobox; it reads MPAKKSRLSKAQRDFLDTYFEVNPHPNTQERAYIASQSLVSEEKIRNWFQNRRTRERGDC.

The protein localises to the nucleus. The polypeptide is Homeobox protein HD-9 (HD-9) (Encephalitozoon cuniculi (strain GB-M1) (Microsporidian parasite)).